The following is a 29-amino-acid chain: GLPICGETCVGGTCNTPGCTCSWPVCTRN.

A cross-link (cyclopeptide (Gly-Asn)) is located at residues 1-29 (GLPICGETCVGGTCNTPGCTCSWPVCTRN). Disulfide bonds link Cys-5-Cys-19, Cys-9-Cys-21, and Cys-14-Cys-26.

In terms of processing, this is a cyclic peptide. Expressed in roots and runners but not in leaves, petals and petioles (at protein level).

In terms of biological role, probably participates in a plant defense mechanism. The polypeptide is Cycloviolacin-O22 (Viola odorata (Sweet violet)).